The sequence spans 100 residues: C-X-C motif chemokine 2 (100 aa).

An N-terminal signal peptide occupies residues 1 to 31; the sequence is MAPPTRQLLNAVLVLLLLLATNHQGTGVVVA. 2 disulfide bridges follow: cysteine 36/cysteine 62 and cysteine 38/cysteine 78.

It belongs to the intercrine alpha (chemokine CxC) family. Homotetramer. At least expressed in the lung and trachea.

The protein resides in the secreted. Functionally, chemotactic for human polymorphonuclear leukocytes but does not induce chemokinesis or an oxidative burst. Contributes to neutrophil activation during inflammation. The chain is C-X-C motif chemokine 2 (Cxcl2) from Rattus norvegicus (Rat).